Consider the following 152-residue polypeptide: HTH-type transcriptional regulator SlrR (152 aa).

The region spanning 6-61 is the HTH cro/C1-type domain; it reads IRLYRKRKGYSINQLAVESGVSKSYLSKIERGVHTNPSVQFLKKVSATLEVELTEL. The H-T-H motif DNA-binding region spans 17–36; it reads INQLAVESGVSKSYLSKIER. The region spanning 113-151 is the Sin domain; that stretch reads YRNRKLTESNIEEWKALMAEAREIGLSVHEVKSFLKTKG.

In terms of assembly, component of the SlrR/SlrA complex.

Represses sigma(D)-dependent flagellar genes and activate the eps and yqxM operons. Repressor activity is regulated by SlrA. Controls the initiation of biofilm formation. This Bacillus subtilis (strain 168) protein is HTH-type transcriptional regulator SlrR (slrR).